The chain runs to 251 residues: Probable transcriptional regulatory protein NFA_37020 (251 aa).

The protein belongs to the TACO1 family.

The protein localises to the cytoplasm. The chain is Probable transcriptional regulatory protein NFA_37020 from Nocardia farcinica (strain IFM 10152).